Reading from the N-terminus, the 307-residue chain is Transmembrane protein 200B (307 aa).

The interval 1–38 (MTAGSPEECGEVRRSPEGRVSRLGRRLGRRRRPRSPPE) is disordered. Residues 10 to 20 (GEVRRSPEGRV) are compositionally biased toward basic and acidic residues. Over residues 22-34 (RLGRRLGRRRRPR) the composition is skewed to basic residues. The helical transmembrane segment at 53–73 (GAFAALGALVVLVGMGIAVAG) threads the bilayer. The tract at residues 81-111 (APGSRAANASSPQMSELRREGRGGGRAHGPH) is disordered. The N-linked (GlcNAc...) asparagine glycan is linked to asparagine 88. Over residues 96–111 (ELRREGRGGGRAHGPH) the composition is skewed to basic and acidic residues. A helical transmembrane segment spans residues 116–136 (LLGPVIMGVGLFVFICANTLL). Residues 180–211 (AVGCAEPEIWDPSPRRGTSPVPSVRSLRSEPA) form a disordered region.

It belongs to the TMEM200 family.

Its subcellular location is the membrane. In Homo sapiens (Human), this protein is Transmembrane protein 200B (TMEM200B).